Consider the following 375-residue polypeptide: 4-hydroxy-3-methylbut-2-en-1-yl diphosphate synthase (flavodoxin) (375 aa).

[4Fe-4S] cluster-binding residues include C270, C273, C305, and E312.

Belongs to the IspG family. [4Fe-4S] cluster serves as cofactor.

It carries out the reaction (2E)-4-hydroxy-3-methylbut-2-enyl diphosphate + oxidized [flavodoxin] + H2O + 2 H(+) = 2-C-methyl-D-erythritol 2,4-cyclic diphosphate + reduced [flavodoxin]. Its pathway is isoprenoid biosynthesis; isopentenyl diphosphate biosynthesis via DXP pathway; isopentenyl diphosphate from 1-deoxy-D-xylulose 5-phosphate: step 5/6. Its function is as follows. Converts 2C-methyl-D-erythritol 2,4-cyclodiphosphate (ME-2,4cPP) into 1-hydroxy-2-methyl-2-(E)-butenyl 4-diphosphate. The chain is 4-hydroxy-3-methylbut-2-en-1-yl diphosphate synthase (flavodoxin) from Yersinia pseudotuberculosis serotype IB (strain PB1/+).